The chain runs to 880 residues: Valine--tRNA ligase (880 aa).

The short motif at 47–57 is the 'HIGH' region element; sequence PNITGKLHLGH. The 'KMSKS' region signature appears at 526–530; the sequence is KMSKS. An ATP-binding site is contributed by lysine 529. Residues 810–845 adopt a coiled-coil conformation; it reads LLDLVDREKELERLNKEKTKLEGEILRVEKKLSNER.

This sequence belongs to the class-I aminoacyl-tRNA synthetase family. ValS type 1 subfamily. As to quaternary structure, monomer.

It localises to the cytoplasm. The catalysed reaction is tRNA(Val) + L-valine + ATP = L-valyl-tRNA(Val) + AMP + diphosphate. In terms of biological role, catalyzes the attachment of valine to tRNA(Val). As ValRS can inadvertently accommodate and process structurally similar amino acids such as threonine, to avoid such errors, it has a 'posttransfer' editing activity that hydrolyzes mischarged Thr-tRNA(Val) in a tRNA-dependent manner. In Clostridium perfringens (strain 13 / Type A), this protein is Valine--tRNA ligase.